Reading from the N-terminus, the 70-residue chain is Large ribosomal subunit protein bL31 (70 aa).

Zn(2+) contacts are provided by cysteine 16, cysteine 18, cysteine 37, and cysteine 40.

This sequence belongs to the bacterial ribosomal protein bL31 family. Type A subfamily. Part of the 50S ribosomal subunit. Requires Zn(2+) as cofactor.

In terms of biological role, binds the 23S rRNA. The sequence is that of Large ribosomal subunit protein bL31 from Psychromonas ingrahamii (strain DSM 17664 / CCUG 51855 / 37).